Reading from the N-terminus, the 152-residue chain is Chemokine-like factor (152 aa).

The region spanning Phe-13–Leu-133 is the MARVEL domain. The next 3 helical transmembrane spans lie at Tyr-45–Leu-65, Ile-81–Pro-101, and Val-108–Ile-128.

The protein belongs to the chemokine-like factor family. In terms of tissue distribution, isoform 1, isoform 2, isoform 3 and isoform 4 have highest expression levels in adult spleen, lung, testis, ovary, peripheral blood leukocyte, placenta, pancreas, and in fetal brain, skeletal muscle, thymus and heart. Lower expression levels in adult skeletal muscle, liver, thymus colon, prostate and fetal spleen and liver.

Its subcellular location is the secreted. It is found in the membrane. Partly inhibited by interleukin 10. In terms of biological role, may play an important role in inflammation and regeneration of skeletal muscle. Essential for embryonic development. Functionally, has chemotactic response in monocytes, neutrophils and lymphocytes. Binds CCR4. The sequence is that of Chemokine-like factor (CKLF) from Homo sapiens (Human).